Here is a 289-residue protein sequence, read N- to C-terminus: (3R)-3-[(carboxymethyl)amino]fatty acid oxygenase/decarboxylase (289 aa).

Residues Tyr-65, Tyr-70, and Gly-93 each contribute to the a (3R)-3-[(carboxymethyl)amino]fatty acid site. Residues His-97 and Asp-99 each coordinate Fe(2+). The a (3R)-3-[(carboxymethyl)amino]fatty acid site is built by Tyr-100 and Lys-158. His-260 lines the Fe(2+) pocket. His-264 is a binding site for 2-oxoglutarate. Residue Arg-275 coordinates a (3R)-3-[(carboxymethyl)amino]fatty acid.

It belongs to the TfdA dioxygenase family. The cofactor is Fe(2+).

The enzyme catalyses a (3R)-3-[(carboxymethyl)amino]fatty acid + 2 2-oxoglutarate + 2 O2 = a (3R)-3-isocyanyl-fatty acid + 2 succinate + 3 CO2 + 2 H2O. The catalysed reaction is a (3R)-3-[(carboxymethyl)amino]fatty acid + 2-oxoglutarate + O2 = a (3R)-3-{[carboxy(hydroxy)methyl]amino}fatty acid + succinate + CO2. It carries out the reaction a (3R)-3-{[carboxy(hydroxy)methyl]amino}fatty acid + 2-oxoglutarate + O2 = a (3R)-3-isocyanyl-fatty acid + succinate + 2 CO2 + 2 H2O. Involved in the biosynthesis of a unique class of isonitrile lipopeptides (INLPs) that seem to play a role in metal acquisition. Catalyzes the conversion of (3R)-3-[(carboxymethyl)amino]fatty acids to (3R)-3-isocyanyl-fatty acids through an oxidative decarboxylation mechanism, thereby generating the isonitrile group of INLPs. This Mycobacterium bovis (strain ATCC BAA-935 / AF2122/97) protein is (3R)-3-[(carboxymethyl)amino]fatty acid oxygenase/decarboxylase.